A 120-amino-acid polypeptide reads, in one-letter code: CLAVATA3/ESR (CLE)-related protein 9 (120 aa).

An N-terminal signal peptide occupies residues 1–26; that stretch reads MTMTHLNRLILISLLFVSLLLKSSTA. Asn-35 is a glycosylation site (N-linked (GlcNAc...) asparagine). Residues 85–120 are disordered; the sequence is RSSRKQPLLSPPPPEIDPRYGVDKRLVPSGPNPLHN. Residues 100-110 show a composition bias toward basic and acidic residues; sequence IDPRYGVDKRL. Pro-112 and Pro-115 each carry hydroxyproline. Pro-115 carries O-linked (Ara...) hydroxyproline glycosylation.

The protein belongs to the CLV3/ESR signal peptide family. In terms of processing, the O-glycosylation (arabinosylation) of the hydroxyproline Pro-115 enhances binding affinity of the CLE9p peptide for its receptor. As to expression, mostly expressed in leaves, flowers, stems and apex, and, to a lower extent, in seedlings, roots, siliques and pollen.

It localises to the secreted. The protein resides in the extracellular space. In terms of biological role, extracellular signal peptide that regulates cell fate. Represses root apical meristem maintenance. Regulates the transition of protophloem cells from proliferation to differentiation, thus impinging on postembryonic growth capacity of the root meristem; this signaling pathway requires CRN and CLV2. The protein is CLAVATA3/ESR (CLE)-related protein 9 of Arabidopsis thaliana (Mouse-ear cress).